The following is a 249-amino-acid chain: Exosome complex component Rrp4 (249 aa).

One can recognise an S1 motif domain in the interval 73-144; the sequence is NDIVIGLVED…RSIDPVLSVK (72 aa). Positions 154-211 constitute a KH domain; sequence GIVIDIMPVKVPRVIGKNKSMYETLTSKSGCSIFVANNGRIWATCPSRFSEEILIEAI.

It belongs to the RRP4 family. Component of the archaeal exosome complex. Forms a trimer of Rrp4 and/or Csl4 subunits. The trimer associates with a hexameric ring-like arrangement composed of 3 Rrp41-Rrp42 heterodimers.

It is found in the cytoplasm. Its function is as follows. Non-catalytic component of the exosome, which is a complex involved in RNA degradation. Increases the RNA binding and the efficiency of RNA degradation. Confers strong poly(A) specificity to the exosome. In Saccharolobus solfataricus (strain ATCC 35092 / DSM 1617 / JCM 11322 / P2) (Sulfolobus solfataricus), this protein is Exosome complex component Rrp4.